Reading from the N-terminus, the 418-residue chain is Gamma-glutamyl phosphate reductase (418 aa).

Belongs to the gamma-glutamyl phosphate reductase family.

Its subcellular location is the cytoplasm. It carries out the reaction L-glutamate 5-semialdehyde + phosphate + NADP(+) = L-glutamyl 5-phosphate + NADPH + H(+). Its pathway is amino-acid biosynthesis; L-proline biosynthesis; L-glutamate 5-semialdehyde from L-glutamate: step 2/2. In terms of biological role, catalyzes the NADPH-dependent reduction of L-glutamate 5-phosphate into L-glutamate 5-semialdehyde and phosphate. The product spontaneously undergoes cyclization to form 1-pyrroline-5-carboxylate. In Marinobacter nauticus (strain ATCC 700491 / DSM 11845 / VT8) (Marinobacter aquaeolei), this protein is Gamma-glutamyl phosphate reductase.